The following is a 614-amino-acid chain: Laccase 1 (614 aa).

Residues 1 to 21 (MSRFARLLLMVVALFFTNAWA) form the signal peptide. Plastocyanin-like domains are found at residues 30 to 143 (ITWK…IRPK) and 172 to 360 (YLVV…MRIP). N-linked (GlcNAc...) asparagine glycosylation is present at N75. Cu cation contacts are provided by H79, H81, H123, and H125. N-linked (GlcNAc...) asparagine glycans are attached at residues N257, N280, N445, N469, and N485. Residues 469 to 599 (NATRDTENDG…GGMGIAILDG (131 aa)) enclose the Plastocyanin-like 3 domain. Cu cation contacts are provided by H507, H510, and H512. A glycan (N-linked (GlcNAc...) asparagine) is linked at N527. Positions 581, 582, 583, and 587 each coordinate Cu cation.

It belongs to the multicopper oxidase family. The cofactor is Cu cation.

The protein resides in the cell surface. The protein operates within pigment biosynthesis. Laccase; part of the Pks1 gene cluster that mediates the biosynthesis of an anthraquinone derivative pigment that contributes to conidial pigmentation that provides protection from UV radiation, heat and cold stress. The polyketide synthase Pks1 produces 1-acetyl-2,4,6,8-tetrahydroxy-9,10-anthraquinone though condensation of acetyl-CoA with malonyl-CoA. The dehydratase EthD and the laccase Mlac1 further convert the anthraquinone derivative into the final conidial pigment. This Metarhizium majus (strain ARSEF 297) protein is Laccase 1.